The following is a 118-amino-acid chain: Small ribosomal subunit protein mS37 (118 aa).

The CHCH domain occupies 42-84 (EATCITEMSMMMACWKQNEFRDEACRKEIQDFFDCSSRAQEAR). Short sequence motifs (cx9C motif) lie at residues 45-55 (CITEMSMMMAC) and 66-76 (CRKEIQDFFDC). Intrachain disulfides connect Cys-45–Cys-76 and Cys-55–Cys-66. The disordered stretch occupies residues 86–105 (MRSIQESLGQSESLSPHKMT). The segment covering 89–99 (IQESLGQSESL) has biased composition (polar residues).

It belongs to the mitochondrion-specific ribosomal protein mS37 family. In terms of assembly, component of the mitochondrial ribosome small subunit (28S) which comprises a 12S rRNA and about 30 distinct proteins.

It localises to the mitochondrion. It is found in the nucleus. This chain is Small ribosomal subunit protein mS37 (Chchd1), found in Mus musculus (Mouse).